A 430-amino-acid polypeptide reads, in one-letter code: Adenylosuccinate synthetase (430 aa).

GTP-binding positions include 12 to 18 and 40 to 42; these read GDEGKGK and GHT. Asp13 serves as the catalytic Proton acceptor. Positions 13 and 40 each coordinate Mg(2+). Residues 13-16, 38-41, Thr130, Arg144, Gln224, Thr239, and Arg303 contribute to the IMP site; these read DEGK and NAGH. His41 acts as the Proton donor in catalysis. Residue 299–305 participates in substrate binding; it reads TNTGRAR. GTP-binding positions include Arg305, 331–333, and 413–415; these read KLD and STS.

The protein belongs to the adenylosuccinate synthetase family. In terms of assembly, homodimer. Mg(2+) serves as cofactor.

It localises to the cytoplasm. It catalyses the reaction IMP + L-aspartate + GTP = N(6)-(1,2-dicarboxyethyl)-AMP + GDP + phosphate + 2 H(+). The protein operates within purine metabolism; AMP biosynthesis via de novo pathway; AMP from IMP: step 1/2. Its function is as follows. Plays an important role in the de novo pathway of purine nucleotide biosynthesis. Catalyzes the first committed step in the biosynthesis of AMP from IMP. The chain is Adenylosuccinate synthetase from Hyphomonas neptunium (strain ATCC 15444).